Reading from the N-terminus, the 208-residue chain is MMHSRSELLDQFLRQQGILNEDILLAIRQLPRERFVPEALAHQAYQNNALPIGEGQTISQPYIVAKMTELLELQYDSNLLEIGTGSGYQTAVLAKLVGHVHSVERIKSLQWNAKRLLKLLDLYNISTKHADGWNGWPSKSPFDAIIVTAAAESIPNDLLYQLKEGGRLVIPIGTESQQLLRITRHGDEFHSEVIEEVRFVPLVSGDLA.

S59 is a catalytic residue.

It belongs to the methyltransferase superfamily. L-isoaspartyl/D-aspartyl protein methyltransferase family.

It is found in the cytoplasm. The enzyme catalyses [protein]-L-isoaspartate + S-adenosyl-L-methionine = [protein]-L-isoaspartate alpha-methyl ester + S-adenosyl-L-homocysteine. In terms of biological role, catalyzes the methyl esterification of L-isoaspartyl residues in peptides and proteins that result from spontaneous decomposition of normal L-aspartyl and L-asparaginyl residues. It plays a role in the repair and/or degradation of damaged proteins. The chain is Protein-L-isoaspartate O-methyltransferase from Aliivibrio salmonicida (strain LFI1238) (Vibrio salmonicida (strain LFI1238)).